Consider the following 585-residue polypeptide: MQHQLKACGDVKTSSRAQQNHRRSTAASAKRSVGAGNSFLATDVTNLEMNSNFMTRKLKKNGNGVIGSPLSNGYFGAQLTANSFNYTPQANPYSNLDFQMAMGSGDVPSLMGMPVHKPSMMLQSDPSMDLTQFTEELQAIQNMPFQPISSSQAALQAFLAANEAASIGSYGFSKSQMLPSNSMRVSGARKNRIVEVKNQNDRLFLVLSDPQASVSTRPTLVPLTRPLQSVAQSCLDLTKKQPFSTEPLYSRKVFIGGLPIDVPDEEVYVTFGSFGKVLIDWPRRPEHNGRASDMYESEMGRRNLRSVSGYVFLVFTHEDSVQDLVNACEFYDGKYYLQLSSPTMQDKAVQVRPWRLSDIDYFSEEKVTVDPRRTVFIGGVPRPTRACDLARSLQDYYGKVSYVGIDIDPELKYPKGAARVTFATAQSFVRAISGRFVQVTHAETNKRVEIKPYVMEDQYCDECEGDLCKHNYAPYYCGDSSCLQYYCEGCWDRMHYEMGQSRADHRPMVRTGDQTRILPRPPHHPAAHHSHQRPQYLLHQDQLDNHHSSRGNSSVISRIVNRNSATMLDHVPGKPFSAISASYGY.

The interval 1–32 (MQHQLKACGDVKTSSRAQQNHRRSTAASAKRS) is disordered. RRM domains follow at residues 251-356 (RKVF…PWRL) and 373-444 (RTVF…HAET). A disordered region spans residues 513-533 (DQTRILPRPPHHPAAHHSHQR). Basic residues predominate over residues 521 to 532 (PPHHPAAHHSHQ).

As to quaternary structure, interacts with fbf-1.

Cytoplasmic polyadenylation element binding protein that binds to and regulates the translation of specific mRNAs. Essential for progression through meiosis. Involved in spermatogenesis. The polypeptide is Cytoplasmic polyadenylation element-binding protein 1 (cpb-1) (Caenorhabditis briggsae).